A 701-amino-acid polypeptide reads, in one-letter code: Elongation factor G 1 (701 aa).

The 283-residue stretch at 8-290 (ERYRNIGISA…AVIDYLPSPL (283 aa)) folds into the tr-type G domain. GTP-binding positions include 17–24 (AHIDAGKT), 88–92 (DTPGH), and 142–145 (NKMD).

Belongs to the TRAFAC class translation factor GTPase superfamily. Classic translation factor GTPase family. EF-G/EF-2 subfamily.

It is found in the cytoplasm. Its function is as follows. Catalyzes the GTP-dependent ribosomal translocation step during translation elongation. During this step, the ribosome changes from the pre-translocational (PRE) to the post-translocational (POST) state as the newly formed A-site-bound peptidyl-tRNA and P-site-bound deacylated tRNA move to the P and E sites, respectively. Catalyzes the coordinated movement of the two tRNA molecules, the mRNA and conformational changes in the ribosome. The protein is Elongation factor G 1 of Paraburkholderia xenovorans (strain LB400).